A 366-amino-acid polypeptide reads, in one-letter code: Homeobox-leucine zipper protein HOX21 (366 aa).

Disordered regions lie at residues 25-81 and 94-132; these read QQAA…SSAQ and MLGK…EKKR. The segment covering 36 to 48 has biased composition (basic residues); it reads HHHHHHHGHHGHH. The segment covering 62–74 has biased composition (pro residues); sequence GPPPPPPPHPHNP. Residues 103-115 are compositionally biased toward gly residues; the sequence is GDGGGGGDEVNGG. The homeobox DNA-binding region spans 127-186; sequence AGEKKRRLNVEQVRTLEKNFELGNKLEPERKMQLARALGLQPRQVAIWFQNRRARWKTKQ. The leucine-zipper stretch occupies residues 185 to 229; it reads KQLEKDYDALKRQLDAVKAENDALLNHNKKLQAEIVALKGREAAS. 2 disordered regions span residues 239 to 287 and 312 to 336; these read EASC…GGGG and LHSS…VQAA. Over residues 240–252 the composition is skewed to polar residues; it reads ASCSNRSENSSEI.

The protein belongs to the HD-ZIP homeobox family. Class I subfamily. Expressed in seedlings, roots, stems, leaf blades and panicles.

It localises to the nucleus. Functionally, probable transcription factor. The sequence is that of Homeobox-leucine zipper protein HOX21 (HOX21) from Oryza sativa subsp. japonica (Rice).